Reading from the N-terminus, the 311-residue chain is Phosphopantothenate--cysteine ligase (311 aa).

A2 carries the post-translational modification N-acetylalanine.

It belongs to the PPC synthetase family. Homodimer.

It carries out the reaction (R)-4'-phosphopantothenate + L-cysteine + ATP = N-[(R)-4-phosphopantothenoyl]-L-cysteine + AMP + diphosphate + H(+). It catalyses the reaction (R)-4'-phosphopantothenate + L-cysteine + CTP = N-[(R)-4-phosphopantothenoyl]-L-cysteine + CMP + diphosphate + H(+). It functions in the pathway cofactor biosynthesis; coenzyme A biosynthesis; CoA from (R)-pantothenate: step 2/5. In terms of biological role, catalyzes the second step in the biosynthesis of coenzyme A from vitamin B5, where cysteine is conjugated to 4'-phosphopantothenate to form 4-phosphopantothenoylcysteine. Has a preference for ATP over CTP as a cosubstrate. The protein is Phosphopantothenate--cysteine ligase (Ppcs) of Mus musculus (Mouse).